We begin with the raw amino-acid sequence, 365 residues long: Cobalt-precorrin-5B C(1)-methyltransferase (365 aa).

It belongs to the CbiD family.

It carries out the reaction Co-precorrin-5B + S-adenosyl-L-methionine = Co-precorrin-6A + S-adenosyl-L-homocysteine. The protein operates within cofactor biosynthesis; adenosylcobalamin biosynthesis; cob(II)yrinate a,c-diamide from sirohydrochlorin (anaerobic route): step 6/10. Functionally, catalyzes the methylation of C-1 in cobalt-precorrin-5B to form cobalt-precorrin-6A. The chain is Cobalt-precorrin-5B C(1)-methyltransferase from Clostridium perfringens (strain SM101 / Type A).